A 184-amino-acid chain; its full sequence is Holliday junction branch migration complex subunit RuvA (184 aa).

Residues 1-61 (MIAALRGNIF…ENEYTLYGFA (61 aa)) form a domain I region. The segment at 62-135 (DKNEKKLFDS…GEFEVVFEEQ (74 aa)) is domain II. Position 135 (glutamine 135) is a region of interest, flexible linker. Residues 135–184 (QNPVFNQALSALESLGFNKNDIVKALNGIKSDNLEETIKLALKKLSKDIK) are domain III.

It belongs to the RuvA family. Homotetramer. Forms an RuvA(8)-RuvB(12)-Holliday junction (HJ) complex. HJ DNA is sandwiched between 2 RuvA tetramers; dsDNA enters through RuvA and exits via RuvB. An RuvB hexamer assembles on each DNA strand where it exits the tetramer. Each RuvB hexamer is contacted by two RuvA subunits (via domain III) on 2 adjacent RuvB subunits; this complex drives branch migration. In the full resolvosome a probable DNA-RuvA(4)-RuvB(12)-RuvC(2) complex forms which resolves the HJ.

It localises to the cytoplasm. Functionally, the RuvA-RuvB-RuvC complex processes Holliday junction (HJ) DNA during genetic recombination and DNA repair, while the RuvA-RuvB complex plays an important role in the rescue of blocked DNA replication forks via replication fork reversal (RFR). RuvA specifically binds to HJ cruciform DNA, conferring on it an open structure. The RuvB hexamer acts as an ATP-dependent pump, pulling dsDNA into and through the RuvAB complex. HJ branch migration allows RuvC to scan DNA until it finds its consensus sequence, where it cleaves and resolves the cruciform DNA. In Nautilia profundicola (strain ATCC BAA-1463 / DSM 18972 / AmH), this protein is Holliday junction branch migration complex subunit RuvA.